We begin with the raw amino-acid sequence, 415 residues long: MDRAFCGNFYYNGKFDYLEVTVKDGVIESIKKDAGNIARSYLPGAVLPAATDIHVHFRTPGETDKEDFSTGSLSAIFGGTTLVMDMPNNIIPIKDYNAFSDKLGVINGTSYSDFALYSMETGSNSLIVDSRSIGLKVYLGGSTNAAGTMAIPDQEAEMINEKGFTVIFHGELEECLRKHQSETKNLREHNLSRPIECELAAAGYVGSLNLKSKIMAHVSSPEVSGDFLREVTPHHLLLNDEMPLGSIGKVNPPLRDRNTQERLLYAYISGQFDILSSDHAPHTEKDKAEFEYAKSGIIGVETRIPLMLALVKKKILFLDVLYKTGIERPPSIFGIRKGKIEVGYDADFMCVDFTNEKKVNEDRLHSKLPRSPFNGMDAIFPSHVVMRGEVVIDNYEEISDPLGRFVPKGYYDQKL.

The Zn(2+) site is built by His54 and His56. Residues 56–58 and Asn88 contribute to the substrate site; that span reads HFR. Zn(2+) contacts are provided by Lys136, His169, His217, and Asp278. Lys136 carries the N6-carboxylysine modification. The active site involves Asp278. His282 serves as a coordination point for substrate.

This sequence belongs to the metallo-dependent hydrolases superfamily. DHOase family. Class I DHOase subfamily. Zn(2+) serves as cofactor.

The enzyme catalyses (S)-dihydroorotate + H2O = N-carbamoyl-L-aspartate + H(+). The protein operates within pyrimidine metabolism; UMP biosynthesis via de novo pathway; (S)-dihydroorotate from bicarbonate: step 3/3. Catalyzes the reversible cyclization of carbamoyl aspartate to dihydroorotate. The protein is Dihydroorotase of Thermoplasma volcanium (strain ATCC 51530 / DSM 4299 / JCM 9571 / NBRC 15438 / GSS1).